Consider the following 583-residue polypeptide: Radixin (583 aa).

The FERM domain maps to 5–295 (INVRVTTMDA…GNHELYMRRR (291 aa)). A 1,2-diacyl-sn-glycero-3-phospho-(1D-myo-inositol) is bound by residues 60-63 (KLNK) and Lys-278. 2 disordered regions span residues 310 to 336 (REEKHQKQLERAQLENEKKKREIAEKE) and 436 to 527 (KKKE…VKKQ). Composition is skewed to basic and acidic residues over residues 436-447 (KKKEEEASEWQH) and 455-464 (DLEKTKEELK). Positions 469 to 480 (APPPPPPPPVIP) are enriched in pro residues. Composition is skewed to basic and acidic residues over residues 483-492 (ENEHDEHDEN) and 506-525 (MNHRSEEERVTETQKNERVK).

Its subcellular location is the cell membrane. It is found in the cytoplasm. The protein localises to the cytoskeleton. Its function is as follows. Probably plays a crucial role in the binding of the barbed end of actin filaments to the plasma membrane. In Gallus gallus (Chicken), this protein is Radixin (RDX).